The chain runs to 673 residues: Annexin A6 (673 aa).

Position 2 is an N-acetylalanine (alanine 2). Residue serine 13 is modified to Phosphoserine. Annexin repeat units lie at residues 20–91 (FDPN…GLMR), 92–163 (PPAY…VLLQ), 175–247 (DLVQ…AVVK), 251–322 (STPE…KLSG), 363–434 (FNPD…GLMM), 435–506 (PPAH…SLAT), 521–595 (EDAQ…AIVQ), and 599–670 (NKPL…ALCG). At tyrosine 30 the chain carries Phosphotyrosine. N6-acetyllysine is present on residues lysine 63, lysine 68, lysine 75, and lysine 81. Tyrosine 201 carries the post-translational modification Phosphotyrosine. N6-acetyllysine occurs at positions 306, 370, and 418. Serine 422 bears the Phosphoserine mark. Residue lysine 483 is modified to N6-acetyllysine. The residue at position 537 (serine 537) is a Phosphoserine. Lysine 620 is subject to N6-acetyllysine.

The protein belongs to the annexin family. Phosphorylated in response to growth factor stimulation.

It is found in the cytoplasm. The protein localises to the melanosome. Functionally, may associate with CD21. May regulate the release of Ca(2+) from intracellular stores. This is Annexin A6 (ANXA6) from Homo sapiens (Human).